The following is a 229-amino-acid chain: Leucyl/phenylalanyl-tRNA--protein transferase (229 aa).

The protein belongs to the L/F-transferase family.

The protein localises to the cytoplasm. The catalysed reaction is N-terminal L-lysyl-[protein] + L-leucyl-tRNA(Leu) = N-terminal L-leucyl-L-lysyl-[protein] + tRNA(Leu) + H(+). It catalyses the reaction N-terminal L-arginyl-[protein] + L-leucyl-tRNA(Leu) = N-terminal L-leucyl-L-arginyl-[protein] + tRNA(Leu) + H(+). The enzyme catalyses L-phenylalanyl-tRNA(Phe) + an N-terminal L-alpha-aminoacyl-[protein] = an N-terminal L-phenylalanyl-L-alpha-aminoacyl-[protein] + tRNA(Phe). In terms of biological role, functions in the N-end rule pathway of protein degradation where it conjugates Leu, Phe and, less efficiently, Met from aminoacyl-tRNAs to the N-termini of proteins containing an N-terminal arginine or lysine. This Pseudomonas syringae pv. syringae (strain B728a) protein is Leucyl/phenylalanyl-tRNA--protein transferase.